Here is a 531-residue protein sequence, read N- to C-terminus: Apolipoprotein N-acyltransferase (531 aa).

7 helical membrane passes run 8 to 28, 34 to 54, 69 to 89, 105 to 125, 136 to 156, 178 to 198, and 207 to 227; these read IILLSGVSRAFVGFLAGLLAV, FGIFAAAFVSFPVLVWLIDGV, PAAIGWSFGFGYFLGGLWWLG, LAVVGLPAVLGVFYALAVVIA, IAALALGFGIAEWLRGFVFTG, VVNLSTINMLAVFVFAAPALI, and GLAIAVALFTAHIAFGFYRLA. The region spanning 243-493 is the CN hydrolase domain; sequence VQPVIDQAKK…RGVLDTILPG (251 aa). E287 serves as the catalytic Proton acceptor. Residue K351 is part of the active site. C405 acts as the Nucleophile in catalysis. Residues 507–527 form a helical membrane-spanning segment; the sequence is IFWLSMAILSIVASFSRFGFN.

It belongs to the CN hydrolase family. Apolipoprotein N-acyltransferase subfamily.

The protein resides in the cell inner membrane. It carries out the reaction N-terminal S-1,2-diacyl-sn-glyceryl-L-cysteinyl-[lipoprotein] + a glycerophospholipid = N-acyl-S-1,2-diacyl-sn-glyceryl-L-cysteinyl-[lipoprotein] + a 2-acyl-sn-glycero-3-phospholipid + H(+). Its pathway is protein modification; lipoprotein biosynthesis (N-acyl transfer). In terms of biological role, catalyzes the phospholipid dependent N-acylation of the N-terminal cysteine of apolipoprotein, the last step in lipoprotein maturation. The sequence is that of Apolipoprotein N-acyltransferase from Sinorhizobium medicae (strain WSM419) (Ensifer medicae).